Consider the following 241-residue polypeptide: Sugar fermentation stimulation protein homolog (241 aa).

It belongs to the SfsA family.

In Nostoc sp. (strain PCC 7120 / SAG 25.82 / UTEX 2576), this protein is Sugar fermentation stimulation protein homolog.